The sequence spans 351 residues: Holliday junction branch migration complex subunit RuvB (351 aa).

Residues 4 to 185 form a large ATPase domain (RuvB-L) region; sequence HDRELVSPEA…FGFVAHMDFY (182 aa). ATP is bound by residues L24, R25, G66, K69, T70, T71, 132-134, R175, Y185, and R222; that span reads EDF. Position 70 (T70) interacts with Mg(2+). Positions 186–256 are small ATPAse domain (RuvB-S); the sequence is SPEELELILH…CARAALSLYE (71 aa). The interval 259–351 is head domain (RuvB-H); the sequence is DEGLDRLDRA…AALFDPDEEP (93 aa). DNA-binding residues include R314 and R319.

The protein belongs to the RuvB family. Homohexamer. Forms an RuvA(8)-RuvB(12)-Holliday junction (HJ) complex. HJ DNA is sandwiched between 2 RuvA tetramers; dsDNA enters through RuvA and exits via RuvB. An RuvB hexamer assembles on each DNA strand where it exits the tetramer. Each RuvB hexamer is contacted by two RuvA subunits (via domain III) on 2 adjacent RuvB subunits; this complex drives branch migration. In the full resolvosome a probable DNA-RuvA(4)-RuvB(12)-RuvC(2) complex forms which resolves the HJ.

It localises to the cytoplasm. It catalyses the reaction ATP + H2O = ADP + phosphate + H(+). In terms of biological role, the RuvA-RuvB-RuvC complex processes Holliday junction (HJ) DNA during genetic recombination and DNA repair, while the RuvA-RuvB complex plays an important role in the rescue of blocked DNA replication forks via replication fork reversal (RFR). RuvA specifically binds to HJ cruciform DNA, conferring on it an open structure. The RuvB hexamer acts as an ATP-dependent pump, pulling dsDNA into and through the RuvAB complex. RuvB forms 2 homohexamers on either side of HJ DNA bound by 1 or 2 RuvA tetramers; 4 subunits per hexamer contact DNA at a time. Coordinated motions by a converter formed by DNA-disengaged RuvB subunits stimulates ATP hydrolysis and nucleotide exchange. Immobilization of the converter enables RuvB to convert the ATP-contained energy into a lever motion, pulling 2 nucleotides of DNA out of the RuvA tetramer per ATP hydrolyzed, thus driving DNA branch migration. The RuvB motors rotate together with the DNA substrate, which together with the progressing nucleotide cycle form the mechanistic basis for DNA recombination by continuous HJ branch migration. Branch migration allows RuvC to scan DNA until it finds its consensus sequence, where it cleaves and resolves cruciform DNA. The chain is Holliday junction branch migration complex subunit RuvB from Thermobifida fusca (strain YX).